The chain runs to 252 residues: Probable transcriptional regulatory protein Caur_1043 (252 aa).

Residues 1–14 (MSGHSKWHTIRRTK) show a composition bias toward basic residues. The tract at residues 1–22 (MSGHSKWHTIRRTKGVNDQRRG) is disordered.

Belongs to the TACO1 family.

The protein resides in the cytoplasm. The chain is Probable transcriptional regulatory protein Caur_1043 from Chloroflexus aurantiacus (strain ATCC 29366 / DSM 635 / J-10-fl).